The chain runs to 247 residues: ATP synthase subunit a (247 aa).

6 helical membrane passes run 24-44 (IAFTTSSAYMLLAVVLIAAMM), 82-102 (FFPLVFSLFMFIFVSNIVGII), 112-132 (IIVTFSLALLVFLTVIIYGFY), 141-161 (LFVPSGIPAVILPLVVIIEII), 181-201 (GHVTLKVFASFVTMLGALGFV), and 206-226 (ALLPLGLTVALTGLELMVAFL).

Belongs to the ATPase A chain family. In terms of assembly, F-type ATPases have 2 components, CF(1) - the catalytic core - and CF(0) - the membrane proton channel. CF(1) has five subunits: alpha(3), beta(3), gamma(1), delta(1), epsilon(1). CF(0) has four main subunits: a, b, b' and c.

It is found in the cell inner membrane. Its function is as follows. Key component of the proton channel; it plays a direct role in the translocation of protons across the membrane. This chain is ATP synthase subunit a, found in Bradyrhizobium sp. (strain ORS 278).